A 300-amino-acid chain; its full sequence is tRNA dimethylallyltransferase (300 aa).

18-25 is an ATP binding site; sequence GPTATGKS. Position 20 to 25 (20 to 25) interacts with substrate; sequence TATGKS. An interaction with substrate tRNA region spans residues 43–46; that stretch reads DSRQ.

This sequence belongs to the IPP transferase family. As to quaternary structure, monomer. Mg(2+) serves as cofactor.

The enzyme catalyses adenosine(37) in tRNA + dimethylallyl diphosphate = N(6)-dimethylallyladenosine(37) in tRNA + diphosphate. Catalyzes the transfer of a dimethylallyl group onto the adenine at position 37 in tRNAs that read codons beginning with uridine, leading to the formation of N6-(dimethylallyl)adenosine (i(6)A). The chain is tRNA dimethylallyltransferase from Cyanothece sp. (strain PCC 7425 / ATCC 29141).